Reading from the N-terminus, the 309-residue chain is Tagatose-6-phosphate kinase (309 aa).

It belongs to the carbohydrate kinase PfkB family. LacC subfamily.

The enzyme catalyses D-tagatofuranose 6-phosphate + ATP = D-tagatofuranose 1,6-bisphosphate + ADP + H(+). It functions in the pathway carbohydrate metabolism; D-tagatose 6-phosphate degradation; D-glyceraldehyde 3-phosphate and glycerone phosphate from D-tagatose 6-phosphate: step 1/2. The chain is Tagatose-6-phosphate kinase from Streptococcus pneumoniae (strain 70585).